The chain runs to 227 residues: ATP phosphoribosyltransferase (227 aa).

It belongs to the ATP phosphoribosyltransferase family. Short subfamily. Heteromultimer composed of HisG and HisZ subunits.

The protein localises to the cytoplasm. It carries out the reaction 1-(5-phospho-beta-D-ribosyl)-ATP + diphosphate = 5-phospho-alpha-D-ribose 1-diphosphate + ATP. It participates in amino-acid biosynthesis; L-histidine biosynthesis; L-histidine from 5-phospho-alpha-D-ribose 1-diphosphate: step 1/9. In terms of biological role, catalyzes the condensation of ATP and 5-phosphoribose 1-diphosphate to form N'-(5'-phosphoribosyl)-ATP (PR-ATP). Has a crucial role in the pathway because the rate of histidine biosynthesis seems to be controlled primarily by regulation of HisG enzymatic activity. The sequence is that of ATP phosphoribosyltransferase from Bordetella avium (strain 197N).